The primary structure comprises 320 residues: Putative malonate transporter (320 aa).

A run of 8 helical transmembrane segments spans residues 1-21 (MAEITGLVLPFFGLIFLGYLT), 32-52 (MGWLNTFIVYLALPALFFKLV), 65-85 (FILTSVGTTYVVFALIFAIGL), 113-133 (GLALLALGETAAVPVALIFCF), 167-187 (IAFHPFILSTFAGVAAAFLSF), 196-216 (LIDYLAQAAAPCALFAMGVTL), 256-276 (IWVQTAVLLASLPTATNVFVI), and 289-309 (ATILITTLLSVATVTGLLYLI).

It belongs to the auxin efflux carrier (TC 2.A.69) family.

It localises to the cell membrane. This chain is Putative malonate transporter (mdcF), found in Rhizobium meliloti (strain 1021) (Ensifer meliloti).